We begin with the raw amino-acid sequence, 352 residues long: Galactokinase (352 aa).

14–17 (EHTD) serves as a coordination point for substrate. ATP contacts are provided by residues S46 and 96 to 102 (GAGLSSS). The Mg(2+) site is built by S102 and E134. Catalysis depends on D146, which acts as the Proton acceptor. Y196 lines the substrate pocket.

The protein belongs to the GHMP kinase family. GalK subfamily.

The protein resides in the cytoplasm. It catalyses the reaction alpha-D-galactose + ATP = alpha-D-galactose 1-phosphate + ADP + H(+). It functions in the pathway carbohydrate metabolism; galactose metabolism. Catalyzes the transfer of the gamma-phosphate of ATP to D-galactose to form alpha-D-galactose-1-phosphate (Gal-1-P). This chain is Galactokinase, found in Thermosipho africanus (strain TCF52B).